The chain runs to 246 residues: MYTRYSYNPSLGRTYVYDNKYYKNLGSVIKNANRKRHYIEHELEEKTLDPLDRYLVAEDPFLGPGKNQKLTLFKEIRNVKPDTMKLVVNWSGKEFLRETWTRFMEDSFPIVNDQEVMDVFLVINMRPTRPNRCFKFLAQHALRCDPDYVPHEVIRIVEPSYVGSNNEYRVSLAKRGGGCPVMNLHSEYTNSFEEFINRVIWENFYKPIVYVGTDSAEEEEILLEVSLVFKIKEFAPDAPLYNGPAY.

This sequence belongs to the polyhedrin family.

Major component of the virus occlusion bodies, which are large proteinaceous structures (polyhedra), that protect the virus from the outside environment for extended periods until they are ingested by insect larvae. The protein is Polyhedrin (PH) of Mamestra brassicae nuclear polyhedrosis virus (MbNPV).